A 498-amino-acid chain; its full sequence is Envelope glycoprotein G (498 aa).

The first 20 residues, 1–20 (MKWATWILALGLLVVRTVVA), serve as a signal peptide directing secretion. 4 N-linked (GlcNAc...) asparagine; by host glycosylation sites follow: Asn56, Asn86, Asn142, and Asn226. Tandem repeats lie at residues 271–292 (EEEA…VGSP) and 308–329 (EEDE…VGSP). The segment at 271-329 (EEEAELTSSDLDNIEIEVVGSPAAPAEGPATEEGRGAEEDEELTSSDLDNIEIEVVGSP) is 2 X 22 AA repeats of E-E-[DE]-[AE]-E-L-T-S-S-D-L-D-N-I-E-I-E-V-V-G-S-P. Residues 290–377 (GSPAAPAEGP…HRLPPEPTFV (88 aa)) are disordered. A compositionally biased stretch (low complexity) spans 292–301 (PAAPAEGPAT). Over residues 308-322 (EEDEELTSSDLDNIE) the composition is skewed to acidic residues. Pro residues predominate over residues 329-342 (PRPPASSPPPPPPR). A compositionally biased stretch (basic and acidic residues) spans 346 to 364 (RGRDHDHDHGHHRADDRGP). Asn443 carries an N-linked (GlcNAc...) asparagine; by host glycan. The chain crosses the membrane as a helical span at residues 463–483 (VALAGLVVVGIVIMCLHMAII).

The protein belongs to the alphaherpesvirinae glycoprotein G family.

Its subcellular location is the virion membrane. Its function is as follows. Chemokine-binding protein that inhibits neutrophils' chemotaxis. The protein is Envelope glycoprotein G (gG) of Sus scrofa (Pig).